Reading from the N-terminus, the 218-residue chain is Pyridoxine/pyridoxamine 5'-phosphate oxidase (218 aa).

Residues 14 to 17 (RREY) and K72 contribute to the substrate site. FMN contacts are provided by residues 67–72 (RIVLLK), 82–83 (YT), R88, K89, and Q111. Substrate-binding residues include Y129, R133, and S137. FMN is bound by residues 146–147 (QS) and W191. Residue 197–199 (RLH) coordinates substrate. R201 is an FMN binding site.

This sequence belongs to the pyridoxamine 5'-phosphate oxidase family. In terms of assembly, homodimer. It depends on FMN as a cofactor.

The enzyme catalyses pyridoxamine 5'-phosphate + O2 + H2O = pyridoxal 5'-phosphate + H2O2 + NH4(+). It carries out the reaction pyridoxine 5'-phosphate + O2 = pyridoxal 5'-phosphate + H2O2. It functions in the pathway cofactor metabolism; pyridoxal 5'-phosphate salvage; pyridoxal 5'-phosphate from pyridoxamine 5'-phosphate: step 1/1. The protein operates within cofactor metabolism; pyridoxal 5'-phosphate salvage; pyridoxal 5'-phosphate from pyridoxine 5'-phosphate: step 1/1. Its function is as follows. Catalyzes the oxidation of either pyridoxine 5'-phosphate (PNP) or pyridoxamine 5'-phosphate (PMP) into pyridoxal 5'-phosphate (PLP). The protein is Pyridoxine/pyridoxamine 5'-phosphate oxidase of Salmonella typhi.